The chain runs to 688 residues: Two-component response regulator ORR23 (688 aa).

Residues 25 to 140 form the Response regulatory domain; it reads RVLAVDDDPV…ELRNIWQHVI (116 aa). Position 76 is a 4-aspartylphosphate (D76). The segment at 161-212 is disordered; that stretch reads PPNADSDHVHGHVTCGSPDQSGRPSKKRKEYCSEEEDEGEVNTQDIDDPSAP. Acidic residues predominate over residues 193 to 208; it reads SEEEDEGEVNTQDIDD. The segment at residues 211–270 is a DNA-binding region (myb-like GARP); it reads APKKPRVVWSVELHRKFVAAVNQLGIDKAVPKRILELMNVEKLTRENVASHLQKYRLYLK.

It belongs to the ARR family. Type-B subfamily. In terms of processing, two-component system major event consists of a His-to-Asp phosphorelay between a sensor histidine kinase (HK) and a response regulator (RR). In plants, the His-to-Asp phosphorelay involves an additional intermediate named Histidine-containing phosphotransfer protein (HPt). This multistep phosphorelay consists of a His-Asp-His-Asp sequential transfer of a phosphate group between first a His and an Asp of the HK protein, followed by the transfer to a conserved His of the HPt protein and finally the transfer to an Asp in the receiver domain of the RR protein.

It is found in the nucleus. Transcriptional activator that binds specific DNA sequence. Functions as a response regulator involved in His-to-Asp phosphorelay signal transduction system. Phosphorylation of the Asp residue in the receiver domain activates the ability of the protein to promote the transcription of target genes. May directly activate some type-A response regulators in response to cytokinins. The protein is Two-component response regulator ORR23 of Oryza sativa subsp. indica (Rice).